Consider the following 385-residue polypeptide: 1-deoxy-D-xylulose 5-phosphate reductoisomerase (385 aa).

NADPH contacts are provided by Thr-10, Gly-11, Ser-12, Ile-13, Gly-36, Asn-38, and Asn-121. Lys-122 lines the 1-deoxy-D-xylulose 5-phosphate pocket. Glu-123 serves as a coordination point for NADPH. Asp-147 is a binding site for Mn(2+). The 1-deoxy-D-xylulose 5-phosphate site is built by Ser-148, Glu-149, Ser-173, and His-196. Mn(2+) is bound at residue Glu-149. Gly-202 lines the NADPH pocket. 1-deoxy-D-xylulose 5-phosphate contacts are provided by Ser-209, Asn-214, Lys-215, and Glu-218. Glu-218 is a binding site for Mn(2+).

The protein belongs to the DXR family. Mg(2+) serves as cofactor. The cofactor is Mn(2+).

The enzyme catalyses 2-C-methyl-D-erythritol 4-phosphate + NADP(+) = 1-deoxy-D-xylulose 5-phosphate + NADPH + H(+). Its pathway is isoprenoid biosynthesis; isopentenyl diphosphate biosynthesis via DXP pathway; isopentenyl diphosphate from 1-deoxy-D-xylulose 5-phosphate: step 1/6. Functionally, catalyzes the NADPH-dependent rearrangement and reduction of 1-deoxy-D-xylulose-5-phosphate (DXP) to 2-C-methyl-D-erythritol 4-phosphate (MEP). This Exiguobacterium sp. (strain ATCC BAA-1283 / AT1b) protein is 1-deoxy-D-xylulose 5-phosphate reductoisomerase.